A 339-amino-acid chain; its full sequence is Cathepsin B (339 aa).

An N-terminal signal peptide occupies residues 1–17; that stretch reads MWWSLIPLSCLLALTSA. Positions 18–79 are cleaved as a propeptide — activation peptide; that stretch reads HDKPSSHPLS…ERVGFSEDIN (62 aa). Intrachain disulfides connect Cys93/Cys122, Cys105/Cys150, Cys141/Cys207, Cys142/Cys146, Cys179/Cys211, and Cys187/Cys198. Cys108 is a catalytic residue. N-linked (GlcNAc...) asparagine glycosylation is present at Asn192. An N6-acetyllysine modification is found at Lys220. Catalysis depends on residues His278 and Asn298. Positions 334 to 339 are excised as a propeptide; the sequence is QYWGRF.

This sequence belongs to the peptidase C1 family. In terms of assembly, dimer of a heavy chain and a light chain cross-linked by a disulfide bond. Interacts with SRPX2. Directly interacts with SHKBP1. In terms of tissue distribution, expressed in the epithelial cells of the prostate and mammary gland.

The protein resides in the lysosome. The protein localises to the melanosome. Its subcellular location is the secreted. It is found in the extracellular space. It localises to the apical cell membrane. It carries out the reaction Hydrolysis of proteins with broad specificity for peptide bonds. Preferentially cleaves -Arg-Arg-|-Xaa bonds in small molecule substrates (thus differing from cathepsin L). In addition to being an endopeptidase, shows peptidyl-dipeptidase activity, liberating C-terminal dipeptides.. Thiol protease which is believed to participate in intracellular degradation and turnover of proteins. Cleaves matrix extracellular phosphoglycoprotein MEPE. Involved in the solubilization of cross-linked TG/thyroglobulin in the thyroid follicle lumen. Has also been implicated in tumor invasion and metastasis. The polypeptide is Cathepsin B (Ctsb) (Rattus norvegicus (Rat)).